Reading from the N-terminus, the 147-residue chain is Probable inactive ribonuclease-like protein 12 (147 aa).

The signal sequence occupies residues 1-20; sequence MIIMVIIFLVLLFWENEVND.

It belongs to the pancreatic ribonuclease family.

The protein localises to the secreted. Does not exhibit any ribonuclease activity. This chain is Probable inactive ribonuclease-like protein 12 (RNASE12), found in Homo sapiens (Human).